A 754-amino-acid chain; its full sequence is ToMV resistance protein Tm-1(GCR237) (754 aa).

The N-terminal inhibitory domain NN stretch occupies residues 1-201 (MATAQSNSPR…AGMVIGRLES (201 aa)). ATP contacts are provided by residues 18 to 20 (DTK), T55, R92, and 124 to 127 (GSGG). The interval 211-431 (KFTVGVTMFG…VDSFLEISPK (221 aa)) is N-terminal inhibitory domain NC.

Belongs to the UPF0261 family. In terms of assembly, homodimer. As to quaternary structure, (Microbial infection) Binds, via an ATP bridge, to the tobamoviruses avirulent (Avr) replication proteins (large and small subunits, e.g. tomato mosaic virus (ToMV/TMV) AC P03587, tobacco mild green mosaic virus (TMGMV) AC P18339 and pepper mild mottle virus (PMMoV) AC P89657) to inhibit their function after the translation of tobamoviruses RNA, but before the viral replication complex formation on the membrane surfaces; this interaction is not possible with resistance-breaking strains replication proteins.

Its function is as follows. Inhibitor of viral RNA replication which confers resistance to some tobamoviruses including tomato mosaic virus (ToMV) (e.g. isolate L), tobacco mosaic virus (TMV), tobacco mild green mosaic virus (TMGMV) and pepper mild mottle virus (PMMoV), but not to resistance-breaking isolates of ToMV (e.g. LT1, SL-1 and ToMV1-2) and tomato brown rugose fruit virus (ToBRFV). Prevents tobamoviruses RNA replication by affecting the association of tobamoviruses replication proteins (large and small subunits) with host membrane-associated proteins (e.g. TOM1, TOM2A and ARL8), thus inhibiting the replication complex formation on the membranes and avoiding viral negative-strand RNA synthesis. Inhibits triphosphatase activity of ToMV replication proteins. The chain is ToMV resistance protein Tm-1(GCR237) from Solanum lycopersicum (Tomato).